The sequence spans 378 residues: Glutamate 5-kinase (378 aa).

ATP is bound at residue Lys-19. Positions 59, 146, and 158 each coordinate substrate. 178 to 179 (TD) is a binding site for ATP. The PUA domain occupies 285–363 (RGSVAVDAGA…SEFERLLGYT (79 aa)).

The protein belongs to the glutamate 5-kinase family.

The protein resides in the cytoplasm. The enzyme catalyses L-glutamate + ATP = L-glutamyl 5-phosphate + ADP. The protein operates within amino-acid biosynthesis; L-proline biosynthesis; L-glutamate 5-semialdehyde from L-glutamate: step 1/2. Its function is as follows. Catalyzes the transfer of a phosphate group to glutamate to form L-glutamate 5-phosphate. The sequence is that of Glutamate 5-kinase from Polaromonas sp. (strain JS666 / ATCC BAA-500).